A 1437-amino-acid chain; its full sequence is IQ domain-containing protein N (1437 aa).

One can recognise an IQ 1 domain in the interval 84 to 112; sequence SRAATVIQASWKGYRLRQKLISQMTAAKA. Disordered stretches follow at residues 332-353, 416-440, and 848-878; these read TSPT…SLSN, SQAQ…KPSP, and STGS…QNPR. The segment covering 422 to 440 has biased composition (low complexity); the sequence is TVSTSSKTSPSSPTVKPSP. Over residues 861 to 878 the composition is skewed to polar residues; it reads AQPQLHSHAPNKTMQNPR. IQ domains are found at residues 1190 to 1216, 1217 to 1239, 1240 to 1258, 1361 to 1389, and 1390 to 1413; these read QAVV…QWAT, IIQA…RATT, IIQA…ARQV, QHRA…SAAK, and MVQA…LGTG.

Interacts with calmodulin. As to expression, expressed in testis, in elongating spermatids (at protein level).

Its function is as follows. Essential for spermiogenesis and fertilization. May be required for manchette assembly in elongating spermatids. This chain is IQ domain-containing protein N (Iqcn), found in Mus musculus (Mouse).